A 501-amino-acid polypeptide reads, in one-letter code: Fumarate reductase 2 (501 aa).

The transit peptide at 1 to 32 directs the protein to the mitochondrion; that stretch reads MIRSVRRVFIYVSIFVLIIVLKRTLSGTDQTS. 37 to 51 contributes to the FAD binding site; sequence VVVIGSGLAGLTTSN. Catalysis depends on residues histidine 281 and arginine 304.

Belongs to the FAD-dependent oxidoreductase 2 family. FRD/SDH subfamily. FAD is required as a cofactor.

Its subcellular location is the mitochondrion. The catalysed reaction is succinate + NAD(+) = fumarate + NADH + H(+). Functionally, irreversibly catalyzes the reduction of fumarate to succinate. Together with the second isozyme of soluble fumarate reductase (FRD1), essential for anaerobic growth. Involved in maintaining redox balance during oxygen deficiency conditions. Reduction of fumarate is the main source of succinate during fermentation, and under anaerobic conditions, the formation of succinate is strictly required for the reoxidation of FADH(2). The sequence is that of Fumarate reductase 2 (OSM1) from Saccharomyces cerevisiae (strain ATCC 204508 / S288c) (Baker's yeast).